Here is an 89-residue protein sequence, read N- to C-terminus: Small ribosomal subunit protein uS15 (89 aa).

It belongs to the universal ribosomal protein uS15 family. In terms of assembly, part of the 30S ribosomal subunit. Forms a bridge to the 50S subunit in the 70S ribosome, contacting the 23S rRNA.

In terms of biological role, one of the primary rRNA binding proteins, it binds directly to 16S rRNA where it helps nucleate assembly of the platform of the 30S subunit by binding and bridging several RNA helices of the 16S rRNA. Forms an intersubunit bridge (bridge B4) with the 23S rRNA of the 50S subunit in the ribosome. The sequence is that of Small ribosomal subunit protein uS15 from Limosilactobacillus fermentum (strain NBRC 3956 / LMG 18251) (Lactobacillus fermentum).